Consider the following 368-residue polypeptide: tRNA-specific 2-thiouridylase MnmA (368 aa).

ATP contacts are provided by residues 10 to 17 (AMSGGIDS) and M36. The Nucleophile role is filled by C106. An intrachain disulfide couples C106 to C203. G130 contributes to the ATP binding site. Positions 152-154 (KDQ) are interaction with tRNA. C203 acts as the Cysteine persulfide intermediate in catalysis. The interval 313–314 (RY) is interaction with tRNA.

It belongs to the MnmA/TRMU family.

It localises to the cytoplasm. The catalysed reaction is S-sulfanyl-L-cysteinyl-[protein] + uridine(34) in tRNA + AH2 + ATP = 2-thiouridine(34) in tRNA + L-cysteinyl-[protein] + A + AMP + diphosphate + H(+). Functionally, catalyzes the 2-thiolation of uridine at the wobble position (U34) of tRNA, leading to the formation of s(2)U34. This chain is tRNA-specific 2-thiouridylase MnmA, found in Cytophaga hutchinsonii (strain ATCC 33406 / DSM 1761 / CIP 103989 / NBRC 15051 / NCIMB 9469 / D465).